We begin with the raw amino-acid sequence, 350 residues long: Serine-threonine kinase receptor-associated protein (350 aa).

WD repeat units lie at residues 12–56 (GHTR…GTFL), 57–96 (GHKGAVWGATLNKDATKAATAAADFTAKVWDAVSGDELMT), 98–137 (AHKHIVKTVDFTQDSNYLLTGGQDKLLRIYDLNKPEAEPK), 141–179 (GHTSGIKKALWCSDDKQILSADDKTVRLWDHATMTEVKS), 180–212 (LNFNMSVSSMEYIPEGEILVITYGRSIAFHSAV), 221–262 (EAPA…ESYK), and 263–302 (GHFGPIHCVRFSPDGELYASGSEDGTLRLWQTVVGKTYGL). Residues Ser312, Ser335, and Ser338 each carry the phosphoserine modification. The interval 326–350 (AEEELEEIASENSDSIYSSTPEVKA) is disordered. Positions 337–350 (NSDSIYSSTPEVKA) are enriched in polar residues. Residue Tyr342 is modified to Phosphotyrosine.

This sequence belongs to the WD repeat STRAP family. In terms of assembly, part of the core SMN complex that contains SMN1, GEMIN2/SIP1, DDX20/GEMIN3, GEMIN4, GEMIN5, GEMIN6, GEMIN7, GEMIN8 and STRAP/UNRIP. Part of the SMN-Sm complex that contains SMN1, GEMIN2/SIP1, DDX20/GEMIN3, GEMIN4, GEMIN5, GEMIN6, GEMIN7, GEMIN8, STRAP/UNRIP and the Sm proteins SNRPB, SNRPD1, SNRPD2, SNRPD3, SNRPE, SNRPF and SNRPG. Interacts directly with GEMIN6 and GEMIN7. Associates with the SMN complex in the cytoplasm but not in the nucleus. Also interacts with CSDE1/UNR and MAWBP. Interacts with PDPK1. Interacts with TRIM48.

The protein resides in the cytoplasm. Its subcellular location is the nucleus. Its function is as follows. The SMN complex catalyzes the assembly of small nuclear ribonucleoproteins (snRNPs), the building blocks of the spliceosome, and thereby plays an important role in the splicing of cellular pre-mRNAs. Most spliceosomal snRNPs contain a common set of Sm proteins SNRPB, SNRPD1, SNRPD2, SNRPD3, SNRPE, SNRPF and SNRPG that assemble in a heptameric protein ring on the Sm site of the small nuclear RNA to form the core snRNP (Sm core). In the cytosol, the Sm proteins SNRPD1, SNRPD2, SNRPE, SNRPF and SNRPG are trapped in an inactive 6S pICln-Sm complex by the chaperone CLNS1A that controls the assembly of the core snRNP. To assemble core snRNPs, the SMN complex accepts the trapped 5Sm proteins from CLNS1A forming an intermediate. Binding of snRNA inside 5Sm triggers eviction of the SMN complex, thereby allowing binding of SNRPD3 and SNRPB to complete assembly of the core snRNP. STRAP plays a role in the cellular distribution of the SMN complex. Negatively regulates TGF-beta signaling but positively regulates the PDPK1 kinase activity by enhancing its autophosphorylation and by significantly reducing the association of PDPK1 with 14-3-3 protein. The polypeptide is Serine-threonine kinase receptor-associated protein (Strap) (Mus musculus (Mouse)).